Reading from the N-terminus, the 90-residue chain is Small ribosomal subunit protein uS15c (90 aa).

The protein belongs to the universal ribosomal protein uS15 family. As to quaternary structure, part of the 30S ribosomal subunit.

It is found in the plastid. The protein resides in the chloroplast. This chain is Small ribosomal subunit protein uS15c (rps15-A), found in Lolium perenne (Perennial ryegrass).